A 397-amino-acid polypeptide reads, in one-letter code: Succinate--CoA ligase [ADP-forming] subunit beta (397 aa).

The 246-residue stretch at Lys9–Glu254 folds into the ATP-grasp domain. ATP is bound by residues Lys46, Gly53–Gly55, Glu109, Ala112, and Glu117. The Mg(2+) site is built by Asn209 and Asp223. Substrate-binding positions include Asn274 and Gly331–Met333.

It belongs to the succinate/malate CoA ligase beta subunit family. As to quaternary structure, heterotetramer of two alpha and two beta subunits. Requires Mg(2+) as cofactor.

The catalysed reaction is succinate + ATP + CoA = succinyl-CoA + ADP + phosphate. It carries out the reaction GTP + succinate + CoA = succinyl-CoA + GDP + phosphate. The protein operates within carbohydrate metabolism; tricarboxylic acid cycle; succinate from succinyl-CoA (ligase route): step 1/1. Succinyl-CoA synthetase functions in the citric acid cycle (TCA), coupling the hydrolysis of succinyl-CoA to the synthesis of either ATP or GTP and thus represents the only step of substrate-level phosphorylation in the TCA. The beta subunit provides nucleotide specificity of the enzyme and binds the substrate succinate, while the binding sites for coenzyme A and phosphate are found in the alpha subunit. This is Succinate--CoA ligase [ADP-forming] subunit beta from Mesorhizobium japonicum (strain LMG 29417 / CECT 9101 / MAFF 303099) (Mesorhizobium loti (strain MAFF 303099)).